Consider the following 209-residue polypeptide: Ion-translocating oxidoreductase complex subunit G (209 aa).

A helical transmembrane segment spans residues 9–29; sequence GLILAVFACVSTGLVALTYAL. Position 175 is an FMN phosphoryl threonine (threonine 175).

The protein belongs to the RnfG family. As to quaternary structure, the complex is composed of six subunits: RnfA, RnfB, RnfC, RnfD, RnfE and RnfG. The cofactor is FMN.

It is found in the cell inner membrane. Its function is as follows. Part of a membrane-bound complex that couples electron transfer with translocation of ions across the membrane. This chain is Ion-translocating oxidoreductase complex subunit G, found in Vibrio cholerae serotype O1 (strain ATCC 39315 / El Tor Inaba N16961).